Reading from the N-terminus, the 486-residue chain is ATP synthase subunit beta (486 aa).

Residues 1 to 12 (MTTTAEKTDRPG) show a composition bias toward basic and acidic residues. The disordered stretch occupies residues 1-22 (MTTTAEKTDRPGKPGSSDTSGR). Residue 171–178 (GGAGVGKT) coordinates ATP.

The protein belongs to the ATPase alpha/beta chains family. As to quaternary structure, F-type ATPases have 2 components, CF(1) - the catalytic core - and CF(0) - the membrane proton channel. CF(1) has five subunits: alpha(3), beta(3), gamma(1), delta(1), epsilon(1). CF(0) has three main subunits: a(1), b(2) and c(9-12). The alpha and beta chains form an alternating ring which encloses part of the gamma chain. CF(1) is attached to CF(0) by a central stalk formed by the gamma and epsilon chains, while a peripheral stalk is formed by the delta and b chains.

The protein resides in the cell membrane. It carries out the reaction ATP + H2O + 4 H(+)(in) = ADP + phosphate + 5 H(+)(out). Produces ATP from ADP in the presence of a proton gradient across the membrane. The catalytic sites are hosted primarily by the beta subunits. The polypeptide is ATP synthase subunit beta (Mycobacterium tuberculosis (strain ATCC 25177 / H37Ra)).